The chain runs to 404 residues: Tryptophan synthase beta chain (404 aa).

At Lys99 the chain carries N6-(pyridoxal phosphate)lysine.

Belongs to the TrpB family. In terms of assembly, tetramer of two alpha and two beta chains. Pyridoxal 5'-phosphate serves as cofactor.

The enzyme catalyses (1S,2R)-1-C-(indol-3-yl)glycerol 3-phosphate + L-serine = D-glyceraldehyde 3-phosphate + L-tryptophan + H2O. It functions in the pathway amino-acid biosynthesis; L-tryptophan biosynthesis; L-tryptophan from chorismate: step 5/5. Functionally, the beta subunit is responsible for the synthesis of L-tryptophan from indole and L-serine. The sequence is that of Tryptophan synthase beta chain from Rhizobium rhizogenes (strain K84 / ATCC BAA-868) (Agrobacterium radiobacter).